The following is a 200-amino-acid chain: Dephospho-CoA kinase (200 aa).

The DPCK domain maps to 3–200; that stretch reads KVGLTGGIGS…EELQRRLHSR (198 aa). Position 11–16 (11–16) interacts with ATP; it reads GSGKSS.

The protein belongs to the CoaE family.

It is found in the cytoplasm. It catalyses the reaction 3'-dephospho-CoA + ATP = ADP + CoA + H(+). It participates in cofactor biosynthesis; coenzyme A biosynthesis; CoA from (R)-pantothenate: step 5/5. Its function is as follows. Catalyzes the phosphorylation of the 3'-hydroxyl group of dephosphocoenzyme A to form coenzyme A. This chain is Dephospho-CoA kinase, found in Thermobifida fusca (strain YX).